Here is a 1039-residue protein sequence, read N- to C-terminus: Isoleucine--tRNA ligase (1039 aa).

The 'HIGH' region motif lies at 46-56 (PYCSGAIHLGT). The 'KMSKS' region signature appears at 600 to 604 (KMSKS). Residue lysine 603 participates in ATP binding.

Belongs to the class-I aminoacyl-tRNA synthetase family. IleS type 2 subfamily. In terms of assembly, monomer. The cofactor is Zn(2+).

It is found in the cytoplasm. The enzyme catalyses tRNA(Ile) + L-isoleucine + ATP = L-isoleucyl-tRNA(Ile) + AMP + diphosphate. Functionally, catalyzes the attachment of isoleucine to tRNA(Ile). As IleRS can inadvertently accommodate and process structurally similar amino acids such as valine, to avoid such errors it has two additional distinct tRNA(Ile)-dependent editing activities. One activity is designated as 'pretransfer' editing and involves the hydrolysis of activated Val-AMP. The other activity is designated 'posttransfer' editing and involves deacylation of mischarged Val-tRNA(Ile). This is Isoleucine--tRNA ligase from Methanocaldococcus jannaschii (strain ATCC 43067 / DSM 2661 / JAL-1 / JCM 10045 / NBRC 100440) (Methanococcus jannaschii).